The sequence spans 331 residues: Tetraacyldisaccharide 4'-kinase (331 aa).

55–62 (TAGGNGKT) lines the ATP pocket.

It belongs to the LpxK family.

It carries out the reaction a lipid A disaccharide + ATP = a lipid IVA + ADP + H(+). It functions in the pathway glycolipid biosynthesis; lipid IV(A) biosynthesis; lipid IV(A) from (3R)-3-hydroxytetradecanoyl-[acyl-carrier-protein] and UDP-N-acetyl-alpha-D-glucosamine: step 6/6. In terms of biological role, transfers the gamma-phosphate of ATP to the 4'-position of a tetraacyldisaccharide 1-phosphate intermediate (termed DS-1-P) to form tetraacyldisaccharide 1,4'-bis-phosphate (lipid IVA). This Edwardsiella ictaluri (strain 93-146) protein is Tetraacyldisaccharide 4'-kinase.